We begin with the raw amino-acid sequence, 456 residues long: Cell cycle checkpoint control protein Rad9 (456 aa).

Positions 300-302 (KRK) match the Nuclear localization signal motif.

The protein belongs to the rad9 family. Component of the 9-1-1 checkpoint clamp complex consisting of Rad9 isoform A, Rad1 and Hus1-like; the interaction with Hus1-like is direct. Does not interact directly with Rad1; this interaction is probably mediated by Hus1-like. This complex probably also forms with Rad9 isoform B, however 9-1-1 complex containing Rad9 isoform A localizes to the nuclear periphery. Interacts with Brca2. As to expression, expressed in ovary.

It localises to the nucleus envelope. Its subcellular location is the nucleus. Functionally, component of the Rad9-Rad1-Hus1 (9-1-1) checkpoint clamp complex. Targets the 9-1-1 complex to the nuclear periphery. Targeting to the nuclear periphery is disrupted in the presence of persistent double stranded break DNA damage, possibly as a function of the meiotic checkpoint. In Drosophila melanogaster (Fruit fly), this protein is Cell cycle checkpoint control protein Rad9.